Reading from the N-terminus, the 353-residue chain is Chorismate synthase (353 aa).

NADP(+)-binding residues include R48 and R54. FMN-binding positions include 125–127 (RSS), 238–239 (NA), G278, 293–297 (KPTSS), and R319.

Belongs to the chorismate synthase family. As to quaternary structure, homotetramer. FMNH2 is required as a cofactor.

The catalysed reaction is 5-O-(1-carboxyvinyl)-3-phosphoshikimate = chorismate + phosphate. It functions in the pathway metabolic intermediate biosynthesis; chorismate biosynthesis; chorismate from D-erythrose 4-phosphate and phosphoenolpyruvate: step 7/7. Catalyzes the anti-1,4-elimination of the C-3 phosphate and the C-6 proR hydrogen from 5-enolpyruvylshikimate-3-phosphate (EPSP) to yield chorismate, which is the branch point compound that serves as the starting substrate for the three terminal pathways of aromatic amino acid biosynthesis. This reaction introduces a second double bond into the aromatic ring system. The sequence is that of Chorismate synthase from Bordetella bronchiseptica (strain ATCC BAA-588 / NCTC 13252 / RB50) (Alcaligenes bronchisepticus).